Consider the following 382-residue polypeptide: D-galactonate dehydratase (382 aa).

Asp-183 is a binding site for Mg(2+). His-185 functions as the Proton donor in the catalytic mechanism. Positions 209 and 235 each coordinate Mg(2+). His-285 (proton acceptor) is an active-site residue.

It belongs to the mandelate racemase/muconate lactonizing enzyme family. GalD subfamily. It depends on Mg(2+) as a cofactor.

The enzyme catalyses D-galactonate = 2-dehydro-3-deoxy-D-galactonate + H2O. It functions in the pathway carbohydrate acid metabolism; D-galactonate degradation; D-glyceraldehyde 3-phosphate and pyruvate from D-galactonate: step 1/3. Functionally, catalyzes the dehydration of D-galactonate to 2-keto-3-deoxy-D-galactonate. The sequence is that of D-galactonate dehydratase from Ralstonia nicotianae (strain ATCC BAA-1114 / GMI1000) (Ralstonia solanacearum).